Reading from the N-terminus, the 62-residue chain is Alpha-conotoxin-like Qc1.2 (62 aa).

A signal peptide spans M1–S21. A propeptide spanning residues F22–K48 is cleaved from the precursor. Q49 is subject to Pyrrolidone carboxylic acid. Intrachain disulfides connect C50–C56 and C51–C61.

The protein belongs to the conotoxin A superfamily. Expressed by the venom duct.

It localises to the secreted. Alpha-conotoxins bind to the nicotinic acetylcholine receptors (nAChR) and inhibit them. This synthetic peptide (10 uM) selectively, but weakly inhibits both rat neuronal alpha-3-beta-2/CHRNA3-CHRNB2 (63%) and alpha-3-beta-4/CHRNA3-CHRNB4 (37%) subtypes of nAChR. This chain is Alpha-conotoxin-like Qc1.2, found in Conus quercinus (Oak cone).